A 541-amino-acid chain; its full sequence is Tegument protein UL21 homolog (541 aa).

The protein belongs to the alphaherpesvirinae UL21 protein family. Interacts (via C-terminus) with UL16.

The protein resides in the virion tegument. It localises to the host cytoplasm. The protein localises to the host nucleus. Functionally, may participate in DNA packaging/capsid maturation events. Promotes efficient incorporation of tegument proteins UL46, UL49, and US3 homologs into virions. May also play a role in capsid transport to the trans-Golgi network (TGN). In Varicella-zoster virus (strain Oka vaccine) (HHV-3), this protein is Tegument protein UL21 homolog.